We begin with the raw amino-acid sequence, 141 residues long: Putative pre-16S rRNA nuclease (141 aa).

This sequence belongs to the YqgF nuclease family.

Its subcellular location is the cytoplasm. Functionally, could be a nuclease involved in processing of the 5'-end of pre-16S rRNA. The chain is Putative pre-16S rRNA nuclease from Roseiflexus sp. (strain RS-1).